The following is a 2208-amino-acid chain: RNA-directed RNA polymerase L (2208 aa).

The interval 26–284 is endonuclease; that stretch reads KEALLSQVEV…SHAGTTVPEC (259 aa). Mn(2+) is bound by residues Glu51, Asp89, and Glu102. Lys115 is an active-site residue. A RdRp catalytic domain is found at 1172–1370; sequence CDMKMAVNNG…FLSSKLNKFV (199 aa). Residue Asp1330 participates in Mg(2+) binding.

This sequence belongs to the Bunyavirales RNA polymerase family. As to quaternary structure, homomultimer; the oligomeric structure is essential for the polymerase activity. Interacts with nucleoprotein N. Interacts with protein Z; this interaction inhibits viral transcription and replication, Z partially blocks the product exit tunnel for the releasing nascent RNA product. The cofactor is Mn(2+). Requires Mg(2+) as cofactor.

It localises to the virion. The protein resides in the host cytoplasm. The catalysed reaction is RNA(n) + a ribonucleoside 5'-triphosphate = RNA(n+1) + diphosphate. Functionally, RNA-dependent RNA polymerase, which is responsible for the replication and transcription of the viral RNA genome using antigenomic RNA as an intermediate. During transcription, synthesizes subgenomic RNAs and assures their capping by a cap-snatching mechanism, which involves the endonuclease activity cleaving the host capped pre-mRNAs. These short capped RNAs are then used as primers for viral transcription. The 3'-end of subgenomic mRNAs molecules are heterogeneous and not polyadenylated. The replicase function is to direct synthesis of antigenomic and genomic RNA which are encapsidated and non capped. As a consequence of the use of the same enzyme for both transcription and replication, these mechanisms need to be well coordinated. These processes may be regulated by proteins N and Z in a dose-dependent manner. Z protein inhibits the viral polymerase L und thus the viral transcription and RNA synthesis. The chain is RNA-directed RNA polymerase L from Hylaeamys megacephalus (Large-headed rice rat).